A 103-amino-acid polypeptide reads, in one-letter code: Large ribosomal subunit protein bL21 (103 aa).

Belongs to the bacterial ribosomal protein bL21 family. In terms of assembly, part of the 50S ribosomal subunit. Contacts protein L20.

Functionally, this protein binds to 23S rRNA in the presence of protein L20. The chain is Large ribosomal subunit protein bL21 from Photobacterium profundum (strain SS9).